Here is a 157-residue protein sequence, read N- to C-terminus: Protein-export protein SecB (157 aa).

The protein belongs to the SecB family. Homotetramer, a dimer of dimers. One homotetramer interacts with 1 SecA dimer.

The protein resides in the cytoplasm. In terms of biological role, one of the proteins required for the normal export of preproteins out of the cell cytoplasm. It is a molecular chaperone that binds to a subset of precursor proteins, maintaining them in a translocation-competent state. It also specifically binds to its receptor SecA. The protein is Protein-export protein SecB of Tolumonas auensis (strain DSM 9187 / NBRC 110442 / TA 4).